The chain runs to 632 residues: Galactan 5-O-arabinofuranosyltransferase (632 aa).

13 consecutive transmembrane segments (helical) span residues 10-30 (QIVLAAVVASGVAAVSLIAIA), 45-65 (ALTTVGQVGCLTGLLAVGGVW), 76-96 (LGGLVFVSAFTVVTLGMPLGA), 162-182 (WAITSITIAVAITLVLWWQMI), 184-204 (FEYALLVTIATAAVTLVYSSP), 206-226 (PYAAMITVLLPPALVLTWSGL), 242-259 (GWATVVGAGIFLGFAATW), 263-282 (LLAYTAFTVVLMTLLLATAL), 298-318 (LAGIVVIAAAIGAITWLPFLA), 344-364 (FPMLQFSLLGMICMLGTLWLI), 375-395 (ALMISVLAVYLWSLLSILTTL), 409-429 (LTVLLVTAGVFGFIETAQSLA), and 434-454 (AVLSVASAIGLAGAIAFSQDI). Topologically, residues 455 to 632 (PNVLRPDLTI…LAIRKPMGNA (178 aa)) are extracellular.

This sequence belongs to the glycosyltransferase 85 family.

Its subcellular location is the cell membrane. It catalyses the reaction Adds an alpha-D-arabinofuranosyl group from trans,octacis-decaprenylphospho-beta-D-arabinofuranose at the 5-O-position of the eighth, tenth and twelfth galactofuranose unit of the galactofuranan chain of [beta-D-galactofuranosyl-(1-&gt;5)-beta-D-galactofuranosyl-(1-&gt;6)]14-beta-D-galactofuranosyl-(1-&gt;5)-beta-D-galactofuranosyl-(1-&gt;4)-alpha-L-rhamnopyranosyl-(1-&gt;3)-N-acetyl-alpha-D-glucosaminyl-diphospho-trans,octacis-decaprenol.. Its pathway is cell wall biogenesis; cell wall polysaccharide biosynthesis. Involved in the biosynthesis of the arabinogalactan (AG) region of the mycolylarabinogalactan-peptidoglycan (mAGP) complex, an essential component of the mycobacterial cell wall. Catalyzes the addition of the first key arabinofuranosyl (Araf) residue from the sugar donor decaprenyl-phospho-arabinose (DPA) on the C-5 of a 6-linked galactofuranosyl (Galf) of the galactan domain, thus 'priming' the galactan for further elaboration by other arabinofuranosyltransferases. This is Galactan 5-O-arabinofuranosyltransferase from Mycobacterium leprae (strain TN).